The following is a 101-amino-acid chain: MKKLAVVGDPDFTIGFMLAGISDIYEVTSDEEIVKAVEDVLKRDDVGVVIIKQEYLKKLPPVLRREIDEKVEPTFVSVGGTGGVEEIREKIRKAIGVDLWK.

The protein belongs to the V-ATPase F subunit family. As to quaternary structure, has multiple subunits with at least A(3), B(3), C, D, E, F, H, I and proteolipid K(x).

Its subcellular location is the cell membrane. In terms of biological role, component of the A-type ATP synthase that produces ATP from ADP in the presence of a proton gradient across the membrane. In Archaeoglobus fulgidus (strain ATCC 49558 / DSM 4304 / JCM 9628 / NBRC 100126 / VC-16), this protein is A-type ATP synthase subunit F.